A 280-amino-acid polypeptide reads, in one-letter code: MFVRVMKIAQNKKIVTVYPTTTIRKALMTMNENKYRRLPVVNAGNNKVVGIITSMDIVDFMGGGSKYNLIREKHERNFLAAINEPVREIMEENVITLKENADIDEAIETFLTKNVGGAPIVNDENQLISLITERDVIRALLDKIDENEVIDDYITRDVIVATPGERLKDVARTMVRNGFRRLPVVSEGRLVGIITSTDFIKLLGSDWAFNHMQTGNVREITNVRMEEIMKRDVITAKEGDKLKKIAEIMVTNDIGALPVVDENLRIKGIITEKDVLKYFA.

CBS domains are found at residues 10 to 67 (QNKK…GSKY), 90 to 146 (MEEN…KIDE), 154 to 209 (ITRD…DWAF), and 229 to 280 (MKRD…KYFA).

This is an uncharacterized protein from Methanocaldococcus jannaschii (strain ATCC 43067 / DSM 2661 / JAL-1 / JCM 10045 / NBRC 100440) (Methanococcus jannaschii).